A 121-amino-acid chain; its full sequence is Cysteine-rich neurotrophic factor (121 aa).

Residues 1–18 (MLLKLIVALSLTLTLASA) form the signal peptide. N57 carries N-linked (GlcNAc...) asparagine glycosylation.

It is found in the secreted. In terms of biological role, interacts with the p75 low-affinity neurotrophin receptor. Evokes neurite outgrowth and modulated calcium currents in pedal motor neurons. May be involved in target-derived trophic support for motor neurons. This is Cysteine-rich neurotrophic factor from Lymnaea stagnalis (Great pond snail).